The sequence spans 590 residues: Aspartate--tRNA(Asp/Asn) ligase (590 aa).

Glutamate 175 provides a ligand contact to L-aspartate. The tract at residues 199-202 is aspartate; sequence QQYK. Residues arginine 221 and histidine 450 each coordinate L-aspartate. 221-223 provides a ligand contact to ATP; sequence RDE. Glutamate 484 contributes to the ATP binding site. Arginine 491 is a binding site for L-aspartate. 536–539 is a binding site for ATP; the sequence is GIDR.

It belongs to the class-II aminoacyl-tRNA synthetase family. Type 1 subfamily. As to quaternary structure, homodimer.

It is found in the cytoplasm. It catalyses the reaction tRNA(Asx) + L-aspartate + ATP = L-aspartyl-tRNA(Asx) + AMP + diphosphate. Its function is as follows. Aspartyl-tRNA synthetase with relaxed tRNA specificity since it is able to aspartylate not only its cognate tRNA(Asp) but also tRNA(Asn). Reaction proceeds in two steps: L-aspartate is first activated by ATP to form Asp-AMP and then transferred to the acceptor end of tRNA(Asp/Asn). This Azorhizobium caulinodans (strain ATCC 43989 / DSM 5975 / JCM 20966 / LMG 6465 / NBRC 14845 / NCIMB 13405 / ORS 571) protein is Aspartate--tRNA(Asp/Asn) ligase.